The following is a 417-amino-acid chain: MDKLKISANGPLNGEITVSGAKNAALPLMCAGLLTSGTLRLKNVPMLADVKTTQKLLQGMGARVLTDNISEFEINGGTVNNTCAPYELVRTMRASILVLGPTLARFGEAQVSLPGGCAIGSRPVDQHLKGLEAMGAEIVIEHGYVKAKGKLKGTRVAMDVVTVGGTENLLMAATLAEGTTVLENCAIEPEVVDLAECLVKMGAKISGIGTSTMVVEGAGELHGCEHSVVPDRIEAGTFLCAVAITGGRVVLRNAAPKTMEVVLDKLVEAGAVIEAGDDWIAIDMRQRPKAVDIRTVVHPGFPTDMQAQFMALNAVAEGSCRVVETIFENRFMHVPELNRMGANITTEGNTAFVQGVEQLSGAVVKATDLRASASLVIAGLAARGETVVEQIYHLDRGYENIEKKLGSVGAKIERVSG.

22–23 (KN) is a binding site for phosphoenolpyruvate. A UDP-N-acetyl-alpha-D-glucosamine-binding site is contributed by arginine 93. Catalysis depends on cysteine 117, which acts as the Proton donor. Cysteine 117 carries the post-translational modification 2-(S-cysteinyl)pyruvic acid O-phosphothioketal. Residues 122 to 126 (RPVDQ), aspartate 304, and isoleucine 326 each bind UDP-N-acetyl-alpha-D-glucosamine.

This sequence belongs to the EPSP synthase family. MurA subfamily.

It localises to the cytoplasm. It carries out the reaction phosphoenolpyruvate + UDP-N-acetyl-alpha-D-glucosamine = UDP-N-acetyl-3-O-(1-carboxyvinyl)-alpha-D-glucosamine + phosphate. The protein operates within cell wall biogenesis; peptidoglycan biosynthesis. Functionally, cell wall formation. Adds enolpyruvyl to UDP-N-acetylglucosamine. This chain is UDP-N-acetylglucosamine 1-carboxyvinyltransferase, found in Neisseria meningitidis serogroup C (strain 053442).